Consider the following 188-residue polypeptide: Elongation factor P (188 aa).

It belongs to the elongation factor P family.

It localises to the cytoplasm. Its pathway is protein biosynthesis; polypeptide chain elongation. Its function is as follows. Involved in peptide bond synthesis. Stimulates efficient translation and peptide-bond synthesis on native or reconstituted 70S ribosomes in vitro. Probably functions indirectly by altering the affinity of the ribosome for aminoacyl-tRNA, thus increasing their reactivity as acceptors for peptidyl transferase. This is Elongation factor P from Anaplasma marginale (strain Florida).